The following is a 353-amino-acid chain: Photosystem II protein D1 (353 aa).

Position 2 is an N-acetylthreonine (Thr2). Thr2 carries the post-translational modification Phosphothreonine. Helical transmembrane passes span 29–46 (YIGW…TATS), 118–133 (HFLL…EWEL), and 142–156 (WIAV…AATA). His118 contributes to the chlorophyll a binding site. Pheophytin a is bound at residue Tyr126. Positions 170 and 189 each coordinate [CaMn4O5] cluster. A helical membrane pass occupies residues 197-218 (FHMLGVAGVFGGSLFSAMHGSL). Residue His198 participates in chlorophyll a binding. Residues His215 and 264 to 265 (SF) each bind a quinone. His215 serves as a coordination point for Fe cation. His272 is a binding site for Fe cation. The helical transmembrane segment at 274–288 (FLAAWPVVGIWFTAL) threads the bilayer. Residues His332, Glu333, Asp342, and Ala344 each contribute to the [CaMn4O5] cluster site. The propeptide occupies 345 to 353 (AVEAPSTNG).

It belongs to the reaction center PufL/M/PsbA/D family. PSII is composed of 1 copy each of membrane proteins PsbA, PsbB, PsbC, PsbD, PsbE, PsbF, PsbH, PsbI, PsbJ, PsbK, PsbL, PsbM, PsbT, PsbX, PsbY, PsbZ, Psb30/Ycf12, at least 3 peripheral proteins of the oxygen-evolving complex and a large number of cofactors. It forms dimeric complexes. The cofactor is The D1/D2 heterodimer binds P680, chlorophylls that are the primary electron donor of PSII, and subsequent electron acceptors. It shares a non-heme iron and each subunit binds pheophytin, quinone, additional chlorophylls, carotenoids and lipids. D1 provides most of the ligands for the Mn4-Ca-O5 cluster of the oxygen-evolving complex (OEC). There is also a Cl(-1) ion associated with D1 and D2, which is required for oxygen evolution. The PSII complex binds additional chlorophylls, carotenoids and specific lipids.. Post-translationally, tyr-161 forms a radical intermediate that is referred to as redox-active TyrZ, YZ or Y-Z. In terms of processing, C-terminally processed by CTPA; processing is essential to allow assembly of the oxygen-evolving complex and thus photosynthetic growth.

The protein resides in the plastid. The protein localises to the chloroplast thylakoid membrane. It catalyses the reaction 2 a plastoquinone + 4 hnu + 2 H2O = 2 a plastoquinol + O2. Photosystem II (PSII) is a light-driven water:plastoquinone oxidoreductase that uses light energy to abstract electrons from H(2)O, generating O(2) and a proton gradient subsequently used for ATP formation. It consists of a core antenna complex that captures photons, and an electron transfer chain that converts photonic excitation into a charge separation. The D1/D2 (PsbA/PsbD) reaction center heterodimer binds P680, the primary electron donor of PSII as well as several subsequent electron acceptors. The protein is Photosystem II protein D1 of Oenothera parviflora (Small-flowered evening primrose).